The chain runs to 68 residues: conotoxin S11.3 (68 aa).

An N-terminal signal peptide occupies residues Met-1–Thr-26. Cystine bridges form between Cys-29–Cys-43, Cys-36–Cys-48, Cys-42–Cys-52, and Cys-47–Cys-56. Tyr-60 bears the Tyrosine amide mark. Residues Ala-64 to Glu-68 constitute a propeptide that is removed on maturation.

Belongs to the conotoxin I2 superfamily. Expressed by the venom duct.

It is found in the secreted. This Conus striatus (Striated cone) protein is conotoxin S11.3.